Consider the following 295-residue polypeptide: Tyrosine recombinase XerC (295 aa).

In terms of domain architecture, Core-binding (CB) spans 1–85 (MLTALNRYWD…ALRRFLSFLV (85 aa)). A Tyr recombinase domain is found at 106–285 (HLPKNMDGEQ…NFQHLAEVYD (180 aa)). Catalysis depends on residues Arg145, Lys169, His237, Arg240, and His263. Tyr272 functions as the O-(3'-phospho-DNA)-tyrosine intermediate in the catalytic mechanism.

This sequence belongs to the 'phage' integrase family. XerC subfamily. As to quaternary structure, forms a cyclic heterotetrameric complex composed of two molecules of XerC and two molecules of XerD.

Its subcellular location is the cytoplasm. In terms of biological role, site-specific tyrosine recombinase, which acts by catalyzing the cutting and rejoining of the recombining DNA molecules. The XerC-XerD complex is essential to convert dimers of the bacterial chromosome into monomers to permit their segregation at cell division. It also contributes to the segregational stability of plasmids. The polypeptide is Tyrosine recombinase XerC (Haemophilus influenzae (strain 86-028NP)).